Reading from the N-terminus, the 440-residue chain is Proline--tRNA ligase (440 aa).

It belongs to the class-II aminoacyl-tRNA synthetase family. ProS type 2 subfamily. Homodimer.

The protein resides in the cytoplasm. It catalyses the reaction tRNA(Pro) + L-proline + ATP = L-prolyl-tRNA(Pro) + AMP + diphosphate. In terms of biological role, catalyzes the attachment of proline to tRNA(Pro) in a two-step reaction: proline is first activated by ATP to form Pro-AMP and then transferred to the acceptor end of tRNA(Pro). In Methylocella silvestris (strain DSM 15510 / CIP 108128 / LMG 27833 / NCIMB 13906 / BL2), this protein is Proline--tRNA ligase.